The sequence spans 142 residues: NADH-quinone oxidoreductase subunit A (142 aa).

The next 3 helical transmembrane spans lie at 8–28 (FGTV…GYLT), 63–83 (FYVV…LFPW), and 93–113 (FALI…VYAW).

Belongs to the complex I subunit 3 family. In terms of assembly, NDH-1 is composed of 14 different subunits. Subunits NuoA, H, J, K, L, M, N constitute the membrane sector of the complex.

It localises to the cell inner membrane. It catalyses the reaction a quinone + NADH + 5 H(+)(in) = a quinol + NAD(+) + 4 H(+)(out). Functionally, NDH-1 shuttles electrons from NADH, via FMN and iron-sulfur (Fe-S) centers, to quinones in the respiratory chain. The immediate electron acceptor for the enzyme in this species is believed to be a menaquinone. Couples the redox reaction to proton translocation (for every two electrons transferred, four hydrogen ions are translocated across the cytoplasmic membrane), and thus conserves the redox energy in a proton gradient. The sequence is that of NADH-quinone oxidoreductase subunit A from Chlorobium phaeobacteroides (strain BS1).